The following is a 346-amino-acid chain: Proto-oncogene serine/threonine-protein kinase mos (346 aa).

The 282-residue stretch at 60-341 (VCLLQRLGAG…RPLLVDLTSL (282 aa)) folds into the Protein kinase domain. ATP is bound by residues 66–74 (LGAGGFGSV) and Lys-87. Asp-201 (proton acceptor) is an active-site residue.

It belongs to the protein kinase superfamily. Ser/Thr protein kinase family.

The catalysed reaction is L-seryl-[protein] + ATP = O-phospho-L-seryl-[protein] + ADP + H(+). The enzyme catalyses L-threonyl-[protein] + ATP = O-phospho-L-threonyl-[protein] + ADP + H(+). This is Proto-oncogene serine/threonine-protein kinase mos from Chlorocebus aethiops (Green monkey).